Consider the following 507-residue polypeptide: Alkyl hydroperoxide reductase subunit F (507 aa).

207-222 (DVLIVGGGPASGSAAI) contacts FAD. A disulfide bridge links Cys-335 with Cys-338. NAD(+) is bound at residue 347–361 (DVAVIGGGNSGVEAA). Residue 467-477 (TNVPGIFAAGD) participates in FAD binding.

The protein belongs to the class-II pyridine nucleotide-disulfide oxidoreductase family. Homodimer. FAD serves as cofactor.

Its function is as follows. Serves to protect the cell against DNA damage by alkyl hydroperoxides. It can use either NADH or NADPH as electron donor for direct reduction of redox dyes or of alkyl hydroperoxides when combined with the AhpC protein. In Staphylococcus epidermidis (strain ATCC 12228 / FDA PCI 1200), this protein is Alkyl hydroperoxide reductase subunit F (ahpF).